We begin with the raw amino-acid sequence, 246 residues long: Aquaporin AqpM (246 aa).

Over 1–11 (MVSLTKRCIAE) the chain is Cytoplasmic. A helical membrane pass occupies residues 12 to 32 (FIGTFILVFFGAGSAAVTLMI). Topologically, residues 33–55 (ASGGTSPNPFNIGIGLLGGLGDW) are extracellular. Residues 56–76 (VAIGLAFGFAIAASIYALGNI) form a helical membrane-spanning segment. At 77–103 (SGCHINPAVTIGLWSVKKFPGREVVPY) the chain is on the cytoplasmic side. An NPA 1 motif is present at residues 82–84 (NPA). The helical transmembrane segment at 104–124 (IIAQLLGAAFGSFIFLQCAGI) threads the bilayer. Topologically, residues 125-145 (GAATVGGLGATAPFPGISYWQ) are extracellular. Residues 146-166 (AMLAEVVGTFLLMITIMGIAV) form a helical membrane-spanning segment. Topologically, residues 167–172 (DERAPK) are cytoplasmic. A helical membrane pass occupies residues 173-193 (GFAGIIIGLTVAGIITTLGNI). At 194–217 (SGSSLNPARTFGPYLNDMIFAGTN) the chain is on the extracellular side. The NPA 2 motif lies at 199 to 201 (NPA). A helical transmembrane segment spans residues 218 to 238 (LWNYYPIYVIGPIVGAVLAAL). Residues 239 to 246 (TYQYLTSE) are Cytoplasmic-facing.

The protein belongs to the MIP/aquaporin (TC 1.A.8) family. As to quaternary structure, homotetramer.

It is found in the cell membrane. Channel that permits osmotically driven movement of water in both directions. It mediates rapid entry or exit of water in response to abrupt changes in osmolarity. Also exhibits a transient but reproducible increase in the initial glycerol flux. This Methanothermobacter marburgensis (strain ATCC BAA-927 / DSM 2133 / JCM 14651 / NBRC 100331 / OCM 82 / Marburg) (Methanobacterium thermoautotrophicum) protein is Aquaporin AqpM (aqpM).